A 347-amino-acid polypeptide reads, in one-letter code: S-adenosylmethionine:tRNA ribosyltransferase-isomerase (347 aa).

The protein belongs to the QueA family. As to quaternary structure, monomer.

The protein resides in the cytoplasm. The catalysed reaction is 7-aminomethyl-7-carbaguanosine(34) in tRNA + S-adenosyl-L-methionine = epoxyqueuosine(34) in tRNA + adenine + L-methionine + 2 H(+). It participates in tRNA modification; tRNA-queuosine biosynthesis. In terms of biological role, transfers and isomerizes the ribose moiety from AdoMet to the 7-aminomethyl group of 7-deazaguanine (preQ1-tRNA) to give epoxyqueuosine (oQ-tRNA). The polypeptide is S-adenosylmethionine:tRNA ribosyltransferase-isomerase (Halalkalibacterium halodurans (strain ATCC BAA-125 / DSM 18197 / FERM 7344 / JCM 9153 / C-125) (Bacillus halodurans)).